Here is a 276-residue protein sequence, read N- to C-terminus: ATP synthase subunit a (276 aa).

A run of 6 helical transmembrane segments spans residues 47–67 (WHID…WLFY), 107–127 (IAPL…MDLI), 152–172 (DLNV…FYSI), 188–208 (PFNH…TLIA), 226–246 (LIFI…SVPW), and 247–267 (AIFH…LTIV).

It belongs to the ATPase A chain family. In terms of assembly, F-type ATPases have 2 components, CF(1) - the catalytic core - and CF(0) - the membrane proton channel. CF(1) has five subunits: alpha(3), beta(3), gamma(1), delta(1), epsilon(1). CF(0) has three main subunits: a(1), b(2) and c(9-12). The alpha and beta chains form an alternating ring which encloses part of the gamma chain. CF(1) is attached to CF(0) by a central stalk formed by the gamma and epsilon chains, while a peripheral stalk is formed by the delta and b chains.

It localises to the cell inner membrane. Key component of the proton channel; it plays a direct role in the translocation of protons across the membrane. The sequence is that of ATP synthase subunit a from Shewanella halifaxensis (strain HAW-EB4).